We begin with the raw amino-acid sequence, 185 residues long: Ribosome-recycling factor (185 aa).

The interval 137–158 is disordered; the sequence is DELKKLEKDHTASEDEVKRAQD.

It belongs to the RRF family.

Its subcellular location is the cytoplasm. Functionally, responsible for the release of ribosomes from messenger RNA at the termination of protein biosynthesis. May increase the efficiency of translation by recycling ribosomes from one round of translation to another. This chain is Ribosome-recycling factor, found in Desulfitobacterium hafniense (strain Y51).